The primary structure comprises 285 residues: Ribosomal RNA small subunit methyltransferase I (285 aa).

Belongs to the methyltransferase superfamily. RsmI family.

The protein resides in the cytoplasm. It catalyses the reaction cytidine(1402) in 16S rRNA + S-adenosyl-L-methionine = 2'-O-methylcytidine(1402) in 16S rRNA + S-adenosyl-L-homocysteine + H(+). Catalyzes the 2'-O-methylation of the ribose of cytidine 1402 (C1402) in 16S rRNA. In Mycobacterium tuberculosis (strain CDC 1551 / Oshkosh), this protein is Ribosomal RNA small subunit methyltransferase I.